Here is a 200-residue protein sequence, read N- to C-terminus: MISPENVVPMVIESSARGERAFDIYSLLLKERIIFLGSQINDQVANLVIAQLLFLDREDPDKDISLYIHSPGGVISAGLAMYDTMQLIRPKVSTICVGVAASMATVLLCAGAKGKRYALPNATIHMHQAMGGAQGQASDIEIAAREIMRQQDILRNILVKHTGQPMEKIIHDSDRDYYLNAQQAVEYGLIDEILQKPENK.

Catalysis depends on Ser102, which acts as the Nucleophile. The active site involves His127.

It belongs to the peptidase S14 family. As to quaternary structure, fourteen ClpP subunits assemble into 2 heptameric rings which stack back to back to give a disk-like structure with a central cavity, resembling the structure of eukaryotic proteasomes.

The protein localises to the cytoplasm. The enzyme catalyses Hydrolysis of proteins to small peptides in the presence of ATP and magnesium. alpha-casein is the usual test substrate. In the absence of ATP, only oligopeptides shorter than five residues are hydrolyzed (such as succinyl-Leu-Tyr-|-NHMec, and Leu-Tyr-Leu-|-Tyr-Trp, in which cleavage of the -Tyr-|-Leu- and -Tyr-|-Trp bonds also occurs).. Cleaves peptides in various proteins in a process that requires ATP hydrolysis. Has a chymotrypsin-like activity. Plays a major role in the degradation of misfolded proteins. The chain is ATP-dependent Clp protease proteolytic subunit from Dehalococcoides mccartyi (strain ATCC BAA-2266 / KCTC 15142 / 195) (Dehalococcoides ethenogenes (strain 195)).